The chain runs to 465 residues: MILANAFCIVLFVDETLRSLAAPPSPPGQDLQGWRVPVDCIRANKLCAAEGSCSSRYRTLRQCLAGRDRNTMLANKECQAALEVLQESPLYDCRCKRGMRKEIQCLQVYWSIHLGLAEGEEFYEASPYEPITSRLSDIFRLASIFSGMDPATNSKSNHCLDAAKACNLNDNCKRLRSGYISTCSKEISATEHCSRRKCHKALRQFFDNVPSEYTYRLLFCSCKDQACAEPRRQTIVPFCSYEDKEKPNCLDLRNVCRADHLCRSRLADFHANCQASFQSLTSCPGDNYQACLGSYTGLIGFDMTPNYVDASTTSITISPWCSCKGSGNLEEECEKFLRDFTENPCLRNAIQAFGNGTDVNLSPKNPSPPITMLPKVEKSPALPDDINDSNTMYDTSIITTCTSIQEHGQKLNKSKEQSLCYSETQLTTDTMPDQKTFVDQKAAGSRHRAARILPAVPIVLLKLLL.

A signal peptide spans 1-21; that stretch reads MILANAFCIVLFVDETLRSLA. 14 disulfides stabilise this stretch: Cys40/Cys93, Cys47/Cys53, Cys63/Cys78, Cys95/Cys105, Cys159/Cys220, Cys166/Cys172, Cys183/Cys198, Cys193/Cys239, Cys222/Cys227, Cys249/Cys321, Cys256/Cys262, Cys273/Cys291, Cys283/Cys345, and Cys323/Cys333. 3 N-linked (GlcNAc...) asparagine glycosylation sites follow: Asn355, Asn387, and Asn412. The GPI-anchor amidated serine moiety is linked to residue Ser445. Residues 446–465 constitute a propeptide, removed in mature form; sequence RHRAARILPAVPIVLLKLLL.

The protein belongs to the GDNFR family. Interacts with NRTN ligand and RET: forms a 2:2:2 ternary complex composed of NRTN ligand, GFRA2 and RET receptor.

The protein localises to the cell membrane. Functionally, receptor for neurturin (NRTN), a growth factor that supports the survival of sympathetic neurons. NRTN-binding leads to autophosphorylation and activation of the RET receptor. In Gallus gallus (Chicken), this protein is GDNF family receptor alpha-2 (GFRA2).